A 96-amino-acid polypeptide reads, in one-letter code: Cell division topological specificity factor (96 aa).

The protein belongs to the MinE family.

In terms of biological role, prevents the cell division inhibition by proteins MinC and MinD at internal division sites while permitting inhibition at polar sites. This ensures cell division at the proper site by restricting the formation of a division septum at the midpoint of the long axis of the cell. The sequence is that of Cell division topological specificity factor from Nitrosococcus oceani (strain ATCC 19707 / BCRC 17464 / JCM 30415 / NCIMB 11848 / C-107).